The following is a 98-amino-acid chain: Acylphosphatase (98 aa).

An Acylphosphatase-like domain is found at 12-98 (TYYVRVRGVV…ERRFDRFQQQ (87 aa)). Active-site residues include arginine 27 and asparagine 45.

Belongs to the acylphosphatase family.

It catalyses the reaction an acyl phosphate + H2O = a carboxylate + phosphate + H(+). In Burkholderia ambifaria (strain ATCC BAA-244 / DSM 16087 / CCUG 44356 / LMG 19182 / AMMD) (Burkholderia cepacia (strain AMMD)), this protein is Acylphosphatase (acyP).